Consider the following 258-residue polypeptide: Isoprenyl transferase 2 (258 aa).

Asp-35 is a catalytic residue. Residue Asp-35 coordinates Mg(2+). Residues 36 to 39, Trp-40, Arg-50, and 81 to 83 each bind substrate; these read GNRR and SDD. The Proton acceptor role is filled by Asn-84. Substrate contacts are provided by residues Arg-87, Arg-207, and 213-215; that span reads RLS. Glu-226 contributes to the Mg(2+) binding site.

This sequence belongs to the UPP synthase family. Homodimer. Mg(2+) serves as cofactor.

Catalyzes the condensation of isopentenyl diphosphate (IPP) with allylic pyrophosphates generating different type of terpenoids. The protein is Isoprenyl transferase 2 of Streptomyces coelicolor (strain ATCC BAA-471 / A3(2) / M145).